A 107-amino-acid polypeptide reads, in one-letter code: L-rhamnose mutarotase (107 aa).

Tyr-18 is a substrate binding site. The active-site Proton donor is the His-22. Substrate contacts are provided by residues Tyr-41 and 76–77 (WW).

This sequence belongs to the rhamnose mutarotase family. As to quaternary structure, homodimer.

The protein resides in the cytoplasm. The catalysed reaction is alpha-L-rhamnose = beta-L-rhamnose. It participates in carbohydrate metabolism; L-rhamnose metabolism. Its function is as follows. Involved in the anomeric conversion of L-rhamnose. This chain is L-rhamnose mutarotase, found in Paraburkholderia xenovorans (strain LB400).